The following is a 512-amino-acid chain: ATP synthase subunit alpha (512 aa).

An ATP-binding site is contributed by 169 to 176 (GDRKTGKT).

The protein belongs to the ATPase alpha/beta chains family. F-type ATPases have 2 components, CF(1) - the catalytic core - and CF(0) - the membrane proton channel. CF(1) has five subunits: alpha(3), beta(3), gamma(1), delta(1), epsilon(1). CF(0) has three main subunits: a(1), b(2) and c(9-12). The alpha and beta chains form an alternating ring which encloses part of the gamma chain. CF(1) is attached to CF(0) by a central stalk formed by the gamma and epsilon chains, while a peripheral stalk is formed by the delta and b chains.

It is found in the cell membrane. It catalyses the reaction ATP + H2O + 4 H(+)(in) = ADP + phosphate + 5 H(+)(out). Functionally, produces ATP from ADP in the presence of a proton gradient across the membrane. The alpha chain is a regulatory subunit. In Limosilactobacillus fermentum (strain NBRC 3956 / LMG 18251) (Lactobacillus fermentum), this protein is ATP synthase subunit alpha.